We begin with the raw amino-acid sequence, 181 residues long: ATP synthase subunit b (181 aa).

Residues 12-32 form a helical membrane-spanning segment; the sequence is LPAVYDIVWSAVVFVVLLVVI.

It belongs to the ATPase B chain family. In terms of assembly, F-type ATPases have 2 components, F(1) - the catalytic core - and F(0) - the membrane proton channel. F(1) has five subunits: alpha(3), beta(3), gamma(1), delta(1), epsilon(1). F(0) has three main subunits: a(1), b(2) and c(10-14). The alpha and beta chains form an alternating ring which encloses part of the gamma chain. F(1) is attached to F(0) by a central stalk formed by the gamma and epsilon chains, while a peripheral stalk is formed by the delta and b chains.

Its subcellular location is the cell membrane. F(1)F(0) ATP synthase produces ATP from ADP in the presence of a proton or sodium gradient. F-type ATPases consist of two structural domains, F(1) containing the extramembraneous catalytic core and F(0) containing the membrane proton channel, linked together by a central stalk and a peripheral stalk. During catalysis, ATP synthesis in the catalytic domain of F(1) is coupled via a rotary mechanism of the central stalk subunits to proton translocation. In terms of biological role, component of the F(0) channel, it forms part of the peripheral stalk, linking F(1) to F(0). This Clavibacter sepedonicus (Clavibacter michiganensis subsp. sepedonicus) protein is ATP synthase subunit b.